Consider the following 258-residue polypeptide: L-aspartate dehydrogenase 1 (258 aa).

Residues Ala121 and Asn181 each coordinate NAD(+). His211 is an active-site residue.

Belongs to the L-aspartate dehydrogenase family.

It catalyses the reaction L-aspartate + NADP(+) + H2O = oxaloacetate + NH4(+) + NADPH + H(+). It carries out the reaction L-aspartate + NAD(+) + H2O = oxaloacetate + NH4(+) + NADH + H(+). It participates in cofactor biosynthesis; NAD(+) biosynthesis; iminoaspartate from L-aspartate (dehydrogenase route): step 1/1. Functionally, specifically catalyzes the NAD or NADP-dependent dehydrogenation of L-aspartate to iminoaspartate. The polypeptide is L-aspartate dehydrogenase 1 (Bordetella parapertussis (strain 12822 / ATCC BAA-587 / NCTC 13253)).